The chain runs to 547 residues: Chaperonin GroEL (547 aa).

Residues 30 to 33 (TLGP), Lys-51, 87 to 91 (DGTTT), Gly-415, and Asp-495 contribute to the ATP site.

It belongs to the chaperonin (HSP60) family. Forms a cylinder of 14 subunits composed of two heptameric rings stacked back-to-back. Interacts with the co-chaperonin GroES.

It localises to the cytoplasm. It carries out the reaction ATP + H2O + a folded polypeptide = ADP + phosphate + an unfolded polypeptide.. Its function is as follows. Together with its co-chaperonin GroES, plays an essential role in assisting protein folding. The GroEL-GroES system forms a nano-cage that allows encapsulation of the non-native substrate proteins and provides a physical environment optimized to promote and accelerate protein folding. The sequence is that of Chaperonin GroEL from Thiobacillus denitrificans (strain ATCC 25259 / T1).